Here is a 335-residue protein sequence, read N- to C-terminus: Biotin synthase (335 aa).

The Radical SAM core domain occupies 43 to 269 (YFGKKVKLNM…INPTKEIRIA (227 aa)). [4Fe-4S] cluster is bound by residues Cys61, Cys65, and Cys68. Residues Cys104, Cys137, Cys197, and Arg267 each coordinate [2Fe-2S] cluster.

The protein belongs to the radical SAM superfamily. Biotin synthase family. As to quaternary structure, homodimer. [4Fe-4S] cluster is required as a cofactor. It depends on [2Fe-2S] cluster as a cofactor.

The catalysed reaction is (4R,5S)-dethiobiotin + (sulfur carrier)-SH + 2 reduced [2Fe-2S]-[ferredoxin] + 2 S-adenosyl-L-methionine = (sulfur carrier)-H + biotin + 2 5'-deoxyadenosine + 2 L-methionine + 2 oxidized [2Fe-2S]-[ferredoxin]. It functions in the pathway cofactor biosynthesis; biotin biosynthesis; biotin from 7,8-diaminononanoate: step 2/2. Functionally, catalyzes the conversion of dethiobiotin (DTB) to biotin by the insertion of a sulfur atom into dethiobiotin via a radical-based mechanism. This Staphylococcus aureus (strain MRSA252) protein is Biotin synthase.